A 162-amino-acid chain; its full sequence is uncharacterized protein (162 aa).

An N-terminal signal peptide occupies residues 1–34; it reads MAREVISTSILMIATVVAVTAAIMVILPAVKDLA.

This is an uncharacterized protein from Archaeoglobus fulgidus (strain ATCC 49558 / DSM 4304 / JCM 9628 / NBRC 100126 / VC-16).